Here is a 629-residue protein sequence, read N- to C-terminus: Ionotropic receptor 75a (629 aa).

The Extracellular segment spans residues 1 to 335; sequence MQLVQLANFV…GDVFLQPFSP (335 aa). Residues asparagine 61, asparagine 112, asparagine 126, asparagine 144, asparagine 166, and asparagine 232 are each glycosylated (N-linked (GlcNAc...) asparagine). The chain crosses the membrane as a helical span at residues 336–356; sequence LVWYLFGGVLSLIGVLLWITF. The Cytoplasmic segment spans residues 357-374; sequence YMECKRMQKRWRLDYLPS. A helical membrane pass occupies residues 375–395; the sequence is LLSTFLISFGAACIQSSSLIP. The Extracellular portion of the chain corresponds to 396–402; it reads RSAGGRL. Residues 403 to 423 form a helical membrane-spanning segment; that stretch reads IYFALFLISFIMYNYYTSVVV. Over 424 to 592 the chain is Cytoplasmic; it reads SSLLSSPVKS…NFVITVGMEY (169 aa). Residues 593 to 613 form a helical membrane-spanning segment; the sequence is VAPLLLMLICADILVVVILLV. Over 614-629 the chain is Extracellular; it reads ELAWKRFFTRPLTIHP.

The protein belongs to the glutamate-gated ion channel (TC 1.A.10.1) family. Expressed in neurons in the antennal coeloconic 2 (ac2) sensillum class of sensory hairs (at protein level).

Its subcellular location is the cell membrane. It localises to the cell projection. The protein resides in the dendrite. Functionally, olfactory receptor for propionic, butyric and 2-oxopentanoic acids. The chain is Ionotropic receptor 75a from Drosophila sechellia (Fruit fly).